A 437-amino-acid chain; its full sequence is tRNA-queuosine alpha-mannosyltransferase (437 aa).

This sequence belongs to the glycosyltransferase group 1 family. Glycosyltransferase 4 subfamily.

It is found in the cytoplasm. Its subcellular location is the nucleus. The enzyme catalyses queuosine(34) in tRNA(Asp) + GDP-alpha-D-mannose = O-4''-alpha-D-mannosylqueuosine(34) in tRNA(Asp) + GDP + H(+). Its function is as follows. Glycosyltransferase that specifically catalyzes mannosylation of cytoplasmic tRNA(Asp) modified with queuosine at position 34 (queuosine(34)). Mannosylates the cyclopentene moiety of queuosine(34) in tRNA(Asp) to form mannosyl-queuosine(34). Mannosylation of queuosine(34) in tRNA(Asp) is required to slow-down elongation at cognate codons, GAC and GAU, thereby regulating protein translation. The protein is tRNA-queuosine alpha-mannosyltransferase (gtdc1) of Xenopus laevis (African clawed frog).